Consider the following 336-residue polypeptide: Alpha-N-acetylgalactosaminide alpha-2,6-sialyltransferase 5 (336 aa).

Topologically, residues 1 to 8 are cytoplasmic; that stretch reads MKTLMRHG. Residues 9 to 29 traverse the membrane as a helical; Signal-anchor for type II membrane protein segment; it reads LAVCLVLTTMCTSLLLVYSSL. Residues 30 to 336 lie on the Lumenal side of the membrane; that stretch reads GSQKERPPQQ…VNHAEGKPVF (307 aa). The tract at residues 34–76 is disordered; the sequence is ERPPQQQQQQQQQQQQAATATGSTQLVESSPQPRRTAPAGPRQ. Positions 38 to 49 are enriched in low complexity; it reads QQQQQQQQQQQQ. Residues 50–66 show a composition bias toward polar residues; sequence AATATGSTQLVESSPQP. C96 and C245 are joined by a disulfide. N-linked (GlcNAc...) asparagine glycans are attached at residues N137 and N161.

The protein belongs to the glycosyltransferase 29 family. High expression in forebrain and to a lesser extent in cerebellum. No expression in salivary gland, intestine, liver, kidney, heart, lung, thymus and spleen.

The protein resides in the golgi apparatus membrane. It carries out the reaction a ganglioside GM1b (d18:1(4E)) + CMP-N-acetyl-beta-neuraminate = a ganglioside GD1alpha (d18:1(4E)) + CMP + H(+). The enzyme catalyses N-acetyl-alpha-neuraminosyl-(2-&gt;3)-beta-D-galactosyl-(1-&gt;3)-N-acetyl-beta-D-glucosaminyl-(1-&gt;3)-beta-D-galactosyl-(1-&gt;4)-beta-D-glucosyl-(1&lt;-&gt;1')-N-acyl-sphing-4-enine + CMP-N-acetyl-beta-neuraminate = N-acetyl-alpha-neuraminosyl-(2-&gt;3)-beta-D-galactosyl-(1-&gt;3)-[N-acetyl-alpha-neuraminosyl-(2-&gt;6)]-N-acetyl-beta-D-glucosaminyl-(1-&gt;3)-beta-D-galactosyl-(1-&gt;4)-beta-D-glucosyl-(1&lt;-&gt;1')-N-acyl-sphing-4-enine + CMP + H(+). It functions in the pathway glycolipid biosynthesis. Functionally, predominantly catalyzes the biosynthesis of ganglioside GD1alpha from GM1b in the brain, by transferring the sialyl group (N-acetyl-alpha-neuraminyl or NeuAc) from CMP-NeuAc to the GalNAc residue on the NeuAc-alpha-2,3-Gal-beta-1,3-GalNAc sequence of GM1b. GD1alpha is a critical molecule in the communication and interaction between neuronal cells and their supportive cells, particularly in brain tissues, and functions as an adhesion molecule in the process of metastasis. Also shows activity towards sialyl Lc4Cer (N-acetyl-alpha-neuraminosyl-(2-&gt;3)-beta-D-galactosyl-(1-&gt;3)-N-acetyl-beta-D-glucosaminyl-(1-&gt;3)-beta-D-galactosyl-(1-&gt;4)-beta-D-glucosyl-(1&lt;-&gt;1')-N-acyl-sphing-4-enine) generating disialyl Lc4Cer, which can lead to the synthesis of disialyl Lewis a (Le(a)), suggested to be a cancer-associated antigen. This Mus musculus (Mouse) protein is Alpha-N-acetylgalactosaminide alpha-2,6-sialyltransferase 5 (St6galnac5).